The following is a 913-amino-acid chain: Transient receptor potential cation channel protein painless (913 aa).

Topologically, residues 1 to 490 (MDFNNCGFID…SSFLFLKWHR (490 aa)) are cytoplasmic. 3 ANK repeats span residues 154–189 (GEFTPLHHVLRKSKVKAGKKELIQLFLDHPELDIDS), 260–289 (EYFGLLQESIKRGRQRAFDVILSTGMDINS), and 368–397 (GRLVPLFFAVKYRNTSAMQKLLKNGAYIGS). Residues 491-511 (LSVIFYLNFLIYSLFTASIIT) form a helical membrane-spanning segment. The Extracellular portion of the chain corresponds to 512–523 (YTLLKFHESDQR). The chain crosses the membrane as a helical span at residues 524–544 (ALTAFFGLLSWLGISYLILRE). Residues 545–555 (CIQWIMSPVRY) lie on the Cytoplasmic side of the membrane. The helical transmembrane segment at 556-576 (FWSITNIMEVALITLSIFTCM) threads the bilayer. At 577–586 (ESSFDKETQR) the chain is on the extracellular side. A helical membrane pass occupies residues 587-607 (VLAVFTILLVSMEFCLLVGSL). Residues 608–628 (PVLSISTHMLMLREVSNSFLK) are Cytoplasmic-facing. Residues 629 to 649 (SFTLYSIFVLTFSLCFYILFG) traverse the membrane as a helical segment. The Extracellular portion of the chain corresponds to 650–708 (KSVEEDQSKSATPCPPLGKKEGKDEEQGFNTFTKPIEAVIKTIVMLTGEFDAGSIQFTS). The segment at 656–675 (QSKSATPCPPLGKKEGKDEE) is disordered. A helical membrane pass occupies residues 709–729 (IYTYLIFLLFVIFMTIVLFNL). The Cytoplasmic portion of the chain corresponds to 730–913 (LNGLAVSDTQ…QLIQLVQDRK (184 aa)).

Belongs to the transient receptor (TC 1.A.4) family. Present in multidendritic neurons, chordotonal neurons, a subset of cells in the central nervous system and a subset of sensory neurons in the antennal-maxillary complex. Not detected in gonads and dorsal vessels (at protein level). Expressed in peripheral neurons that extend multiple branched dendrites beneath the larval epidermis, similar to vertebrate pain receptors.

It localises to the membrane. In terms of biological role, receptor-activated non-selective cation channel involved in detection of pain sensation due to high temperature. Involved in heat nociception by being activated by noxious temperature of 38 degrees Celsius. The protein is Transient receptor potential cation channel protein painless (pain) of Drosophila melanogaster (Fruit fly).